The sequence spans 846 residues: Leucine--tRNA ligase (846 aa).

Residues 47-57 carry the 'HIGH' region motif; sequence PYPSGRIHMGH. A 'KMSKS' region motif is present at residues 621 to 625; the sequence is KMSKS. Position 624 (K624) interacts with ATP.

The protein belongs to the class-I aminoacyl-tRNA synthetase family.

The protein resides in the cytoplasm. The catalysed reaction is tRNA(Leu) + L-leucine + ATP = L-leucyl-tRNA(Leu) + AMP + diphosphate. This chain is Leucine--tRNA ligase, found in Zymomonas mobilis subsp. mobilis (strain ATCC 31821 / ZM4 / CP4).